Reading from the N-terminus, the 770-residue chain is Amyloid-beta precursor protein (770 aa).

The first 17 residues, 1–17, serve as a signal peptide directing secretion; it reads MLPSLALLLLAAWTVRA. Residues 18-701 are Extracellular-facing; that stretch reads LEVPTDGNAG…AEDVGSNKGA (684 aa). The tract at residues 28–123 is GFLD subdomain; sequence LLAEPQIAMF…PYRCLVGEFV (96 aa). An E1 domain is found at 28–189; the sequence is LLAEPQIAMF…RGVEFVCCPL (162 aa). Disulfide bonds link Cys38-Cys62, Cys73-Cys117, Cys98-Cys105, Cys133-Cys187, Cys144-Cys174, and Cys158-Cys186. 96-110 provides a ligand contact to heparin; the sequence is NWCKRGRKQCKTHTH. The segment at 131-189 is cuBD subdomain; sequence DKCKFLHQERMDVCETHLHWHTVAKETCSEKSTNLHDYGMLLPCGIDKFRGVEFVCCPL. The copper-binding stretch occupies residues 135-155; sequence FLHQERMDVCETHLHWHTVAK. The Cu(2+) site is built by His147, His151, and Tyr168. The tract at residues 181 to 188 is zinc-binding; that stretch reads GVEFVCCP. Zn(2+) contacts are provided by Glu183, Cys186, and Cys187. The segment covering 196–207 has biased composition (acidic residues); the sequence is IDSADAEEDDSD. Positions 196 to 283 are disordered; it reads IDSADAEEDD…TTTTTTTESV (88 aa). Residue Ser198 is modified to Phosphoserine; by CK2. Position 206 is a phosphoserine; by CK1 (Ser206). A sulfotyrosine mark is found at Tyr217 and Tyr262. The span at 228 to 264 shows a compositional bias: acidic residues; that stretch reads VAEEEEVADVEEEEAEDDEDVEDGDEVEEEAEEPYEE. Over residues 268 to 281 the composition is skewed to low complexity; sequence RTTSIATTTTTTTE. 3 disulfide bridges follow: Cys291-Cys341, Cys300-Cys324, and Cys316-Cys337. A BPTI/Kunitz inhibitor domain is found at 291-341; the sequence is CSEQAETGPCRAMISRWYFDVTEGKCAPFFYGGCGGNRNNFDTEEYCMAVC. Sulfotyrosine is present on Tyr336. The OX-2 motif lies at 344–365; that stretch reads VSSQSLLKTTSEPLPQDPVKLP. The region spanning 374–565 is the E2 domain; sequence AVDKYLETPG…EEIQDEVDEL (192 aa). Residues 391–423 are heparin-binding; sequence FQKAKERLEAKHRERMSQVMREWEEAERQAKNL. At Ser441 the chain carries Phosphoserine. The heparin-binding stretch occupies residues 491–522; sequence FNMLKKYVRAEQKDRQHTLKHFEHVRMVDPKK. Tyr497 is modified (phosphotyrosine). The collagen-binding stretch occupies residues 523–540; the sequence is AAQIRSQVMTHLRVIYER. Asn542 and Asn571 each carry an N-linked (GlcNAc...) asparagine glycan. An O-linked (Xyl...) (chondroitin sulfate) serine; in L-APP isoforms glycan is attached at Ser656. Cu(2+) contacts are provided by His677 and His685. Residues His677 and His685 each contribute to the Zn(2+) site. An interaction with PSEN1 region spans residues 695-722; sequence VGSNKGAIIGLMVGGVVIATVIVITLVM. A helical membrane pass occupies residues 702–722; it reads IIGLMVGGVVIATVIVITLVM. Topologically, residues 723-770 are cytoplasmic; that stretch reads LKKKQYTSIHHGVVEVDAAVTPEERHLSKMQQNGYENPTYKFFEQMQN. The short motif at 724–734 is the Basolateral sorting signal element; that stretch reads KKKQYTSIHHG. Thr729 carries the post-translational modification Phosphothreonine. Ser730 is subject to Phosphoserine; by APP-kinase I. An interaction with G(o)-alpha region spans residues 732–751; that stretch reads HHGVVEVDAAVTPEERHLSK. At Thr743 the chain carries Phosphothreonine; by CDK5 and MAPK10. The interval 756-770 is required for the interaction with KIF5B and for anterograde transport in axons; that stretch reads GYENPTYKFFEQMQN. Position 757 is a phosphotyrosine; by ABL1 (Tyr757). The YENPXY motif; contains endocytosis signal signature appears at 757-762; it reads YENPTY. Lys763 is covalently cross-linked (Glycyl lysine isopeptide (Lys-Gly) (interchain with G-Cter in ubiquitin)).

This sequence belongs to the APP family. As to quaternary structure, binds, via its C-terminus, to the PID domain of several cytoplasmic proteins, including APBB family members, the APBA family, MAPK8IP1, SHC1 and NUMB and DAB1. Binding to DAB1 inhibits its serine phosphorylation. Interacts (via NPXY motif) with DAB2 (via PID domain); the interaction is impaired by tyrosine phosphorylation of the NPXY motif. Also interacts with GPCR-like protein BPP, APPBP1, IB1, KNS2 (via its TPR domains), APPBP2 (via BaSS) and DDB1. In vitro, it binds MAPT via the MT-binding domains. Associates with microtubules in the presence of ATP and in a kinesin-dependent manner. Interacts, through a C-terminal domain, with GNAO1. Amyloid-beta protein 42 binds CHRNA7 in hippocampal neurons. Amyloid-beta associates with HADH2. Interacts with CPEB1, ANKS1B and AGER. Interacts with ITM2B. Interacts with ITM2C. Interacts with IDE. Can form homodimers; dimerization is enhanced in the presence of Cu(2+) ions. Can form homodimers; this is promoted by heparin binding. Amyloid-beta protein 40 interacts with S100A9. CTF-alpha product of APP interacts with GSAP. Isoform APP695 interacts with SORL1 (via N-terminal ectodomain); this interaction retains APP in the trans-Golgi network and reduces processing into soluble APP-alpha and amyloid-beta peptides. The C99 fragment also interacts with SORL1. Isoform APP751 interacts with SORL1. Isoform APP770 interacts with SORL1. Interacts with PLD3. Interacts with VDAC1. Interacts with NSG1; could regulate APP processing. Amyloid-beta protein 42 interacts with FPR2. Interacts with SYT7. Interacts (via transmembrane region) with PSEN1; the interaction is direct. Interacts with LRRK2. Interacts (via cytoplasmic domain) with KIF5B. Interacts (via C-terminus) with APBB2/FE65L1 (via C-terminus). Interacts (via intracellular domain) with APBB3. In terms of processing, proteolytically processed under normal cellular conditions. Cleavage either by alpha-secretase, beta-secretase or theta-secretase leads to generation and extracellular release of soluble APP peptides, S-APP-alpha and S-APP-beta, and the retention of corresponding membrane-anchored C-terminal fragments, C80, C83 and C99. Subsequent processing of C80 and C83 by gamma-secretase yields P3 peptides. This is the major secretory pathway and is non-amyloidogenic. Alternatively, presenilin/nicastrin-mediated gamma-secretase processing of C99 releases the amyloid-beta proteins, amyloid-beta protein 40 and amyloid-beta protein 42, major components of amyloid plaques, and the cytotoxic C-terminal fragments, gamma-CTF(50), gamma-CTF(57) and gamma-CTF(59). PSEN1 cleavage is more efficient with C83 than with C99 as substrate (in vitro). Amyloid-beta protein 40 and Amyloid-beta protein 42 are cleaved by ACE. Many other minor amyloid-beta peptides, amyloid-beta 1-X peptides, are found in cerebral spinal fluid (CSF) including the amyloid-beta X-15 peptides, produced from the cleavage by alpha-secretase. Proteolytically cleaved by caspases during neuronal apoptosis. Cleavage at Asp-739 by either caspase-3, -8 or -9 results in the production of the neurotoxic C31 peptide and the increased production of amyloid-beta peptides. Post-translationally, N-glycosylated. In terms of processing, O-glycosylated. O-linkage of chondroitin sulfate to the L-APP isoforms produces the APP proteoglycan core proteins, the appicans. The chondroitin sulfate chain of appicans contains 4-O-sulfated galactose in the linkage region and chondroitin sulfate E in the repeated disaccharide region. Phosphorylation in the C-terminal on tyrosine, threonine and serine residues is neuron-specific. Phosphorylation can affect APP processing, neuronal differentiation and interaction with other proteins. Phosphorylated on Thr-743 in neuronal cells by Cdc5 kinase and Mapk10, in dividing cells by Cdc2 kinase in a cell-cycle dependent manner with maximal levels at the G2/M phase and, in vitro, by GSK-3-beta. The Thr-743 phosphorylated form causes a conformational change which reduces binding of Fe65 family members. In dopaminergic (DA) neurons, phosphorylation on Thr-743 by LRKK2 promotes the production and the nuclear translocation of the APP intracellular domain (AICD) which induces DA neuron apoptosis. Phosphorylation on Tyr-757 is required for SHC binding. Phosphorylated in the extracellular domain by casein kinases on both soluble and membrane-bound APP. This phosphorylation is inhibited by heparin. Post-translationally, extracellular binding and reduction of copper, results in a corresponding oxidation of Cys-144 and Cys-158, and the formation of a disulfide bond. In terms of processing, trophic-factor deprivation triggers the cleavage of surface APP by beta-secretase to release sAPP-beta which is further cleaved to release an N-terminal fragment of APP (N-APP). Amyloid-beta peptides are degraded by IDE. Post-translationally, sulfated on tyrosine residues. Expressed in the brain. In the brain, non-L-APP isoforms are expressed in neurons, isoform APP695 being the predominant form. In astrocytes and microglial cells, almost 50% is L-isoform (appican).

It localises to the cell membrane. The protein localises to the membrane. Its subcellular location is the perikaryon. It is found in the cell projection. The protein resides in the growth cone. It localises to the clathrin-coated pit. The protein localises to the early endosome. Its subcellular location is the cytoplasmic vesicle. It is found in the endoplasmic reticulum. The protein resides in the golgi apparatus. It localises to the cell surface. The protein localises to the nucleus. Its subcellular location is the cytoplasm. It is found in the secreted. Its function is as follows. Functions as a cell surface receptor and performs physiological functions on the surface of neurons relevant to neurite growth, neuronal adhesion and axonogenesis. Interaction between APP molecules on neighboring cells promotes synaptogenesis. Involved in cell mobility and transcription regulation through protein-protein interactions. Can promote transcription activation through binding to APBB1-KAT5 and inhibit Notch signaling through interaction with Numb. Couples to apoptosis-inducing pathways such as those mediated by G(o) and JIP. Inhibits G(o)-alpha ATPase activity. Acts as a kinesin I membrane receptor, mediating the axonal transport of beta-secretase and presenilin 1. By acting as a kinesin I membrane receptor, plays a role in axonal anterograde transport of cargo towards synapses in axons. May be involved in copper homeostasis/oxidative stress through copper ion reduction. Can regulate neurite outgrowth through binding to components of the extracellular matrix such as heparin and collagen I and IV. The splice isoforms that contain the BPTI domain possess protease inhibitor activity. Induces a AGER-dependent pathway that involves activation of p38 MAPK, resulting in internalization of amyloid-beta peptide and leading to mitochondrial dysfunction in cultured mitochondrial dysfunction in cultured cortical neurons. Provides Cu(2+) ions for GPC1 which are required for release of nitric oxide (NO) and subsequent degradation of the heparan sulfate chains on GPC1. In terms of biological role, amyloid-beta peptides are lipophilic metal chelators with metal-reducing activity. Binds transient metals such as copper, zinc and iron. Rat and mouse amyloid-beta peptides bind only weakly transient metals and have little reducing activity due to substitutions of transient metal chelating residues. Amyloid-beta protein 42 may activate mononuclear phagocytes in the brain and elicits inflammatory responses. Promotes both tau aggregation and TPK II-mediated phosphorylation. Also binds GPC1 in lipid rafts. Functionally, appicans elicit adhesion of neural cells to the extracellular matrix and may regulate neurite outgrowth in the brain. The gamma-CTF peptides as well as the caspase-cleaved peptides, including C31, are potent enhancers of neuronal apoptosis. In Rattus norvegicus (Rat), this protein is Amyloid-beta precursor protein.